The following is an 859-amino-acid chain: Leucine--tRNA ligase (859 aa).

Positions 42-52 (PYPSGRLHMGH) match the 'HIGH' region motif. Positions 618–622 (KMSKS) match the 'KMSKS' region motif. Lysine 621 contacts ATP.

This sequence belongs to the class-I aminoacyl-tRNA synthetase family.

The protein resides in the cytoplasm. The enzyme catalyses tRNA(Leu) + L-leucine + ATP = L-leucyl-tRNA(Leu) + AMP + diphosphate. The chain is Leucine--tRNA ligase from Shewanella putrefaciens (strain CN-32 / ATCC BAA-453).